Here is a 338-residue protein sequence, read N- to C-terminus: Methionine aminopeptidase 1D, mitochondrial (338 aa).

A mitochondrion-targeting transit peptide spans 1–47 (MAAPCAAQCLYRTGGLRLLQRISRLPHCHKDASLAHQCQFHRSFFWR). His164 serves as a coordination point for substrate. A divalent metal cation-binding residues include Asp181, Asp192, and His255. A substrate-binding site is contributed by His262. Residues Glu287 and Glu318 each contribute to the a divalent metal cation site.

It belongs to the peptidase M24A family. Methionine aminopeptidase type 1 subfamily. Co(2+) is required as a cofactor. It depends on Zn(2+) as a cofactor. Mn(2+) serves as cofactor. The cofactor is Fe(2+).

The protein localises to the mitochondrion. The catalysed reaction is Release of N-terminal amino acids, preferentially methionine, from peptides and arylamides.. Removes the N-terminal methionine from nascent proteins. The N-terminal methionine is often cleaved when the second residue in the primary sequence is small and uncharged (Met-Ala-, Cys, Gly, Pro, Ser, Thr, or Val). Requires deformylation of the N(alpha)-formylated initiator methionine before it can be hydrolyzed. The sequence is that of Methionine aminopeptidase 1D, mitochondrial (metap1d) from Danio rerio (Zebrafish).